The primary structure comprises 279 residues: Digeranylgeranylglyceryl phosphate synthase (279 aa).

8 helical membrane passes run 5–25, 27–47, 90–110, 127–147, 148–168, 198–218, 219–239, and 259–279; these read GFFA…AIVA, LIAT…VLLV, FLLG…IALV, FFGN…GGAY, AGWH…LAML, KTAL…AVPY, LWWG…ILFA, and TLLK…AVFL.

Belongs to the UbiA prenyltransferase family. DGGGP synthase subfamily. Mg(2+) is required as a cofactor.

Its subcellular location is the cell membrane. The enzyme catalyses sn-3-O-(geranylgeranyl)glycerol 1-phosphate + (2E,6E,10E)-geranylgeranyl diphosphate = 2,3-bis-O-(geranylgeranyl)-sn-glycerol 1-phosphate + diphosphate. The protein operates within membrane lipid metabolism; glycerophospholipid metabolism. Prenyltransferase that catalyzes the transfer of the geranylgeranyl moiety of geranylgeranyl diphosphate (GGPP) to the C2 hydroxyl of (S)-3-O-geranylgeranylglyceryl phosphate (GGGP). This reaction is the second ether-bond-formation step in the biosynthesis of archaeal membrane lipids. The sequence is that of Digeranylgeranylglyceryl phosphate synthase from Methanoregula boonei (strain DSM 21154 / JCM 14090 / 6A8).